Here is a 117-residue protein sequence, read N- to C-terminus: Protein Wnt-6 (117 aa).

Ser-1 carries O-palmitoleoyl serine; by PORCN lipidation. A disulfide bridge connects residues Cys-83 and Cys-98. N-linked (GlcNAc...) asparagine glycosylation is present at Asn-84.

The protein belongs to the Wnt family. In terms of processing, palmitoleoylation is required for efficient binding to frizzled receptors. Depalmitoleoylation leads to Wnt signaling pathway inhibition.

Its subcellular location is the secreted. It localises to the extracellular space. It is found in the extracellular matrix. In terms of biological role, ligand for members of the frizzled family of seven transmembrane receptors. Probable developmental protein. May be a signaling molecule which affects the development of discrete regions of tissues. Is likely to signal over only few cell diameters. This is Protein Wnt-6 (WNT-6) from Evasterias troschelii (Mottled sea star).